The chain runs to 21 residues: C-phycocyanin alpha subunit (21 aa).

This sequence belongs to the phycobiliprotein family. As to quaternary structure, heterodimer of an alpha and a beta subunit, which further assembles into trimers and the trimers into hexamers. Post-translationally, contains one covalently linked bilin chromophore.

It is found in the cellular thylakoid membrane. Functionally, light-harvesting photosynthetic bile pigment-protein from the phycobiliprotein complex (phycobilisome, PBS). Phycocyanin is the major phycobiliprotein in the PBS rod. The protein is C-phycocyanin alpha subunit of Anabaena sp. (strain L31).